Here is a 424-residue protein sequence, read N- to C-terminus: Ribulose bisphosphate carboxylase (424 aa).

Residue Lys159 is the Proton acceptor of the active site. A substrate-binding site is contributed by Lys161. Positions 185, 187, and 188 each coordinate Mg(2+). Lys185 bears the N6-carboxylysine mark. His277 serves as the catalytic Proton acceptor. Substrate is bound by residues Arg278, His310, 347 to 349, and 369 to 372; these read SGG and QAGG.

The protein belongs to the RuBisCO large chain family. Type III subfamily. As to quaternary structure, homodimer or homodecamer. In contrast to form I RuBisCO, the form III RuBisCO is composed solely of large subunits. Mg(2+) serves as cofactor.

It catalyses the reaction 2 (2R)-3-phosphoglycerate + 2 H(+) = D-ribulose 1,5-bisphosphate + CO2 + H2O. It carries out the reaction D-ribulose 1,5-bisphosphate + O2 = 2-phosphoglycolate + (2R)-3-phosphoglycerate + 2 H(+). Its function is as follows. Catalyzes the addition of molecular CO(2) and H(2)O to ribulose 1,5-bisphosphate (RuBP), generating two molecules of 3-phosphoglycerate (3-PGA). Functions in an archaeal AMP degradation pathway, together with AMP phosphorylase and R15P isomerase. The sequence is that of Ribulose bisphosphate carboxylase from Pyrococcus abyssi (strain GE5 / Orsay).